Here is an 860-residue protein sequence, read N- to C-terminus: Leucine--tRNA ligase (860 aa).

Positions 42-52 match the 'HIGH' region motif; it reads PYPSGRLHMGH. The short motif at 619-623 is the 'KMSKS' region element; it reads KMSKS. Position 622 (Lys622) interacts with ATP.

The protein belongs to the class-I aminoacyl-tRNA synthetase family.

It is found in the cytoplasm. It carries out the reaction tRNA(Leu) + L-leucine + ATP = L-leucyl-tRNA(Leu) + AMP + diphosphate. The chain is Leucine--tRNA ligase from Shigella boydii serotype 18 (strain CDC 3083-94 / BS512).